A 652-amino-acid chain; its full sequence is NAD(P)H-quinone oxidoreductase subunit 5, chloroplastic (652 aa).

Helical transmembrane passes span 9–29 (WLIP…LISF), 40–60 (YSFL…LILF), 91–111 (PLTA…LIYT), 124–144 (FFAY…SPNL), 147–167 (IYVF…FWFT), 188–208 (GLLL…FDVI), 225–245 (LAIF…AQFP), 258–278 (TPIS…FLVA), 289–309 (FLMD…ATIA), 327–347 (LGYM…FHLM), 354–374 (ALLF…VGFN), 395–415 (GNAF…ACFW), 424–444 (AFVH…LTSF), 482–502 (TLPL…GTPF), 526–546 (LFIA…AYLI), and 630–650 (ILMI…YYSL).

It belongs to the complex I subunit 5 family. NDH is composed of at least 16 different subunits, 5 of which are encoded in the nucleus.

The protein resides in the plastid. The protein localises to the chloroplast thylakoid membrane. The enzyme catalyses a plastoquinone + NADH + (n+1) H(+)(in) = a plastoquinol + NAD(+) + n H(+)(out). The catalysed reaction is a plastoquinone + NADPH + (n+1) H(+)(in) = a plastoquinol + NADP(+) + n H(+)(out). Its function is as follows. NDH shuttles electrons from NAD(P)H:plastoquinone, via FMN and iron-sulfur (Fe-S) centers, to quinones in the photosynthetic chain and possibly in a chloroplast respiratory chain. The immediate electron acceptor for the enzyme in this species is believed to be plastoquinone. Couples the redox reaction to proton translocation, and thus conserves the redox energy in a proton gradient. This is NAD(P)H-quinone oxidoreductase subunit 5, chloroplastic (ndhF) from Mesostigma viride (Green alga).